A 962-amino-acid chain; its full sequence is RNA-binding protein 15 (962 aa).

Composition is skewed to basic and acidic residues over residues 1–10 (MRSAGREPLP), 34–52 (LRRD…ERSP), and 59–72 (RGGE…ERSK). Residues 1–167 (MRSAGREPLP…SAPGGGDGVE (167 aa)) are disordered. The span at 82–94 (GSSSGKTDSGGSR) shows a compositional bias: low complexity. The segment covering 97 to 112 (LHLDKSSSRGGSREYE) has biased composition (basic and acidic residues). At Ser-108 the chain carries Phosphoserine. The segment covering 118–129 (SSSRLHSYSSPS) has biased composition (low complexity). Positions 134–149 (SGGGESRSSSRGGGGE) are enriched in gly residues. Low complexity predominate over residues 150-159 (SRSSGAASSA). The region spanning 169–251 (KTLKISELGS…RPLKIEAVYV (83 aa)) is the RRM 1 domain. Residues Ser-178, Ser-207, and Ser-209 each carry the phosphoserine modification. Lys-245 participates in a covalent cross-link: Glycyl lysine isopeptide (Lys-Gly) (interchain with G-Cter in SUMO2). Ser-252, Ser-256, and Ser-258 each carry phosphoserine. Residues 257–297 (RSPLDKDAYAPSSSVVGTSVGSHRHAPGGGGGQRSLSPGGA) are disordered. Phosphotyrosine is present on Tyr-265. Low complexity predominate over residues 268–277 (SSSVVGTSVG). Phosphoserine is present on residues Ser-291, Ser-293, and Ser-364. RRM domains follow at residues 373–450 (RTLF…YGKA) and 454–528 (TRLW…FADT). Glycyl lysine isopeptide (Lys-Gly) (interchain with G-Cter in SUMO2) cross-links involve residues Lys-405, Lys-419, and Lys-444. At Lys-449 the chain carries N6-acetyllysine. Composition is skewed to basic and acidic residues over residues 553–580 (GHRA…RDLY) and 612–661 (SLDR…SERP). Residues 553 to 779 (GHRAPDPLRS…KQDGGTAPVA (227 aa)) are disordered. Thr-567 carries the post-translational modification Phosphothreonine. Position 577 is an asymmetric dimethylarginine; alternate; by PRMT1 (Arg-577). Arg-577 is subject to Omega-N-methylarginine; alternate; by PRMT1. Ser-621, Ser-655, Ser-670, Ser-674, and Ser-701 each carry phosphoserine. Basic and acidic residues-rich tracts occupy residues 673–692 (RSPE…DRSS), 701–729 (SPVR…AERD), and 742–751 (NPLKKEDRSD). Lys-745 is covalently cross-linked (Glycyl lysine isopeptide (Lys-Gly) (interchain with G-Cter in SUMO2)). The span at 754–771 (APSASTSSSKQKPPSQKQ) shows a compositional bias: low complexity. Phosphoserine occurs at positions 768 and 782. The SPOC domain occupies 778–957 (VAASSPKLCL…YLVMIIVRAK (180 aa)). The interval 866–885 (GSSDSRSSSSSATSDTAAST) is disordered. Residues 867-885 (SSDSRSSSSSATSDTAAST) are compositionally biased toward low complexity. Position 936 is a phosphoserine (Ser-936).

This sequence belongs to the RRM Spen family. In terms of assembly, component of the WMM complex, a N6-methyltransferase complex composed of a catalytic subcomplex, named MAC, and of an associated subcomplex, named MACOM. The MAC subcomplex is composed of METTL3 and METTL14. The MACOM subcomplex is composed of WTAP, ZC3H13, CBLL1/HAKAI, VIRMA, and, in some cases of RBM15 (RBM15 or RBM15B). Also a component of a MACOM-like complex, named WTAP complex, composed of WTAP, ZC3H13, CBLL1, VIRMA, RBM15, BCLAF1 and THRAP3. Interacts with RBPJ. Interacts (via SPOC domain) with SETD1B. Interacts with NXF1, the interaction is required to promote mRNA export. Interacts with SF3B1. Methylated at Arg-577 by PRMT1, leading to promote ubiquitination by CNOT4 and subsequent degradation by the proteasome. In terms of processing, ubiquitinated by CNOT4 following methylation at Arg-577 by PRMT1.

It is found in the nucleus speckle. The protein localises to the nucleus. It localises to the nucleoplasm. Its subcellular location is the nucleus envelope. The protein resides in the nucleus membrane. Its function is as follows. RNA-binding protein that acts as a key regulator of N6-methyladenosine (m6A) methylation of RNAs, thereby regulating different processes, such as hematopoietic cell homeostasis, alternative splicing of mRNAs and X chromosome inactivation mediated by Xist RNA. Associated component of the WMM complex, a complex that mediates N6-methyladenosine (m6A) methylation of RNAs, a modification that plays a role in the efficiency of mRNA splicing and RNA processing. Plays a key role in m6A methylation, possibly by binding target RNAs and recruiting the WMM complex. Involved in random X inactivation mediated by Xist RNA: acts by binding Xist RNA and recruiting the WMM complex, which mediates m6A methylation, leading to target YTHDC1 reader on Xist RNA and promoting transcription repression activity of Xist. Required for the development of multiple tissues, such as the maintenance of the homeostasis of long-term hematopoietic stem cells and for megakaryocyte (MK) and B-cell differentiation. Regulates megakaryocyte differentiation by regulating alternative splicing of genes important for megakaryocyte differentiation; probably regulates alternative splicing via m6A regulation. Required for placental vascular branching morphogenesis and embryonic development of the heart and spleen. Acts as a regulator of thrombopoietin response in hematopoietic stem cells by regulating alternative splicing of MPL. May also function as an mRNA export factor, stimulating export and expression of RTE-containing mRNAs which are present in many retrotransposons that require to be exported prior to splicing. High affinity binding of pre-mRNA to RBM15 may allow targeting of the mRNP to the export helicase DBP5 in a manner that is independent of splicing-mediated NXF1 deposition, resulting in export prior to splicing. May be implicated in HOX gene regulation. The chain is RNA-binding protein 15 from Mus musculus (Mouse).